Reading from the N-terminus, the 209-residue chain is Large ribosomal subunit protein uL3 (209 aa).

It belongs to the universal ribosomal protein uL3 family. Part of the 50S ribosomal subunit. Forms a cluster with proteins L14 and L19.

One of the primary rRNA binding proteins, it binds directly near the 3'-end of the 23S rRNA, where it nucleates assembly of the 50S subunit. The chain is Large ribosomal subunit protein uL3 from Oceanobacillus iheyensis (strain DSM 14371 / CIP 107618 / JCM 11309 / KCTC 3954 / HTE831).